Here is a 500-residue protein sequence, read N- to C-terminus: Lysine--tRNA ligase (500 aa).

The Mg(2+) site is built by E409 and E416.

The protein belongs to the class-II aminoacyl-tRNA synthetase family. Homodimer. Mg(2+) is required as a cofactor.

It is found in the cytoplasm. The catalysed reaction is tRNA(Lys) + L-lysine + ATP = L-lysyl-tRNA(Lys) + AMP + diphosphate. This Lysinibacillus sphaericus (strain C3-41) protein is Lysine--tRNA ligase.